A 469-amino-acid chain; its full sequence is Ribosomal protein uS12 methylthiotransferase RimO (469 aa).

In terms of domain architecture, MTTase N-terminal spans Pro-17–Pro-132. Positions 26, 62, 91, 167, 171, and 174 each coordinate [4Fe-4S] cluster. One can recognise a Radical SAM core domain in the interval Leu-153 to Lys-395. The 73-residue stretch at Gln-397 to Val-469 folds into the TRAM domain.

It belongs to the methylthiotransferase family. RimO subfamily. It depends on [4Fe-4S] cluster as a cofactor.

It is found in the cytoplasm. The enzyme catalyses L-aspartate(89)-[ribosomal protein uS12]-hydrogen + (sulfur carrier)-SH + AH2 + 2 S-adenosyl-L-methionine = 3-methylsulfanyl-L-aspartate(89)-[ribosomal protein uS12]-hydrogen + (sulfur carrier)-H + 5'-deoxyadenosine + L-methionine + A + S-adenosyl-L-homocysteine + 2 H(+). In terms of biological role, catalyzes the methylthiolation of an aspartic acid residue of ribosomal protein uS12. The sequence is that of Ribosomal protein uS12 methylthiotransferase RimO from Polaromonas sp. (strain JS666 / ATCC BAA-500).